Here is a 176-residue protein sequence, read N- to C-terminus: Ribosome rescue factor SmrB (176 aa).

A Smr domain is found at 97 to 172; it reads LDMHGMTQQE…GNGALLVLID (76 aa).

It belongs to the SmrB family. As to quaternary structure, associates with collided ribosomes, but not with correctly translating polysomes.

Its function is as follows. Acts as a ribosome collision sensor. Detects stalled/collided disomes (pairs of ribosomes where the leading ribosome is stalled and a second ribosome has collided with it) and endonucleolytically cleaves mRNA at the 5' boundary of the stalled ribosome. Stalled/collided disomes form a new interface (primarily via the 30S subunits) that binds SmrB. Cleaved mRNA becomes available for tmRNA ligation, leading to ribosomal subunit dissociation and rescue of stalled ribosomes. This Photobacterium profundum (strain SS9) protein is Ribosome rescue factor SmrB.